The chain runs to 264 residues: Merozoite surface protein 2 (264 aa).

Residues 1-20 (MKVIKTLSIINFFIFVTFNI) form the signal peptide. 2 N-linked (GlcNAc...) asparagine glycosylation sites follow: Asn22 and Asn36. Residues 44–190 (ANEGSNTNSV…PQTAENENPA (147 aa)) are polymorphic region. Residues 46-225 (EGSNTNSVGA…DSQKECTDGN (180 aa)) are disordered. 2 consecutive repeat copies span residues 60–91 (ADTI…TPTA) and 92–123 (ADTI…TPTA). The 2 X 32 AA perfects repeats stretch occupies residues 60 to 123 (ADTIASGSQR…GESQTTTPTA (64 aa)). The span at 70-81 (STNSASTSTTNN) shows a compositional bias: low complexity. Polar residues predominate over residues 82 to 101 (GESQTTTPTAADTIASGSQR). A compositionally biased stretch (low complexity) spans 102–145 (STNSASTSTTNNGESQTTTPTAADTPTTTESNSPSPPITTTESS). Asn152 carries N-linked (GlcNAc...) asparagine glycosylation. Residues 154 to 166 (TDGKGEESEKQNE) show a composition bias toward basic and acidic residues. 2 N-linked (GlcNAc...) asparagine glycosylation sites follow: Asn168 and Asn213. A disulfide bond links Cys221 and Cys229. 2 N-linked (GlcNAc...) asparagine glycosylation sites follow: Asn237 and Asn238. Asn238 is lipidated: GPI-anchor amidated asparagine. The propeptide at 239–264 (SSNIASINKFVVLISATLVLSFAIFI) is removed in mature form.

The protein resides in the cell membrane. In terms of biological role, may play a role in the merozoite attachment to the erythrocyte. This Plasmodium falciparum (isolate fid3 / India) protein is Merozoite surface protein 2.